The primary structure comprises 113 residues: Hydrogenase maturation factor HypA (113 aa).

A Ni(2+)-binding site is contributed by H2. Zn(2+) is bound by residues C73, C76, C89, and C92.

It belongs to the HypA/HybF family.

Functionally, involved in the maturation of [NiFe] hydrogenases. Required for nickel insertion into the metal center of the hydrogenase. The sequence is that of Hydrogenase maturation factor HypA from Dechloromonas aromatica (strain RCB).